The following is a 333-amino-acid chain: GTPase Obg (333 aa).

An Obg domain is found at Met-1–Ile-159. An OBG-type G domain is found at Ala-160–Gln-332. Residues Gly-166–Ser-173, Phe-191–Asn-195, Asp-212–Gly-215, Asn-282–Asp-285, and Ser-313–Ile-315 contribute to the GTP site. Positions 173 and 193 each coordinate Mg(2+).

This sequence belongs to the TRAFAC class OBG-HflX-like GTPase superfamily. OBG GTPase family. Monomer. It depends on Mg(2+) as a cofactor.

The protein localises to the cytoplasm. In terms of biological role, an essential GTPase which binds GTP, GDP and possibly (p)ppGpp with moderate affinity, with high nucleotide exchange rates and a fairly low GTP hydrolysis rate. Plays a role in control of the cell cycle, stress response, ribosome biogenesis and in those bacteria that undergo differentiation, in morphogenesis control. This Buchnera aphidicola subsp. Schizaphis graminum (strain Sg) protein is GTPase Obg.